The chain runs to 312 residues: Putative S-adenosyl-L-methionine-dependent methyltransferase Mkms_0097 (312 aa).

S-adenosyl-L-methionine-binding positions include aspartate 134 and 163 to 164 (DL).

This sequence belongs to the UPF0677 family.

Its function is as follows. Exhibits S-adenosyl-L-methionine-dependent methyltransferase activity. This is Putative S-adenosyl-L-methionine-dependent methyltransferase Mkms_0097 from Mycobacterium sp. (strain KMS).